The primary structure comprises 411 residues: Short chain dehydrogenase ausT (411 aa).

Residues Asp105, Gln137, Tyr249, and Arg253 each contribute to the NADP(+) site. Tyr249 acts as the Proton donor in catalysis. The Proton donor role is filled by Tyr263.

Belongs to the short-chain dehydrogenases/reductases (SDR) family.

The protein operates within secondary metabolite biosynthesis; terpenoid biosynthesis. In terms of biological role, short chain dehydrogenase; part of the gene cluster that mediates the biosynthesis of calidodehydroaustin, a fungal meroterpenoid. The first step of the pathway is the synthesis of 3,5-dimethylorsellinic acid by the polyketide synthase ausA. 3,5-dimethylorsellinic acid is then prenylated by the polyprenyl transferase ausN. Further epoxidation by the FAD-dependent monooxygenase ausM and cyclization by the probable terpene cyclase ausL lead to the formation of protoaustinoid A. Protoaustinoid A is then oxidized to spiro-lactone preaustinoid A3 by the combined action of the FAD-binding monooxygenases ausB and ausC, and the dioxygenase ausE. Acid-catalyzed keto-rearrangement and ring contraction of the tetraketide portion of preaustinoid A3 by ausJ lead to the formation of preaustinoid A4. The aldo-keto reductase ausK, with the help of ausH, is involved in the next step by transforming preaustinoid A4 into isoaustinone which is in turn hydroxylated by the P450 monooxygenase ausI to form austinolide. The cytochrome P450 monooxygenase ausG modifies austinolide to austinol. Austinol is further acetylated to austin by the O-acetyltransferase ausP, which spontaneously changes to dehydroaustin. The cytochrome P450 monooxygenase ausR then converts dehydroaustin is into 7-dehydrodehydroaustin. The hydroxylation catalyzed by ausR permits the O-acetyltransferase ausQ to add an additional acetyl group to the molecule, leading to the formation of acetoxydehydroaustin. The short chain dehydrogenase ausT catalyzes the reduction of the double bond present between carbon atoms 1 and 2 to convert 7-dehydrodehydroaustin into 1,2-dihydro-7-hydroxydehydroaustin. AusQ catalyzes not only an acetylation reaction but also the addition of the PKS ausV diketide product to 1,2-dihydro-7-hydroxydehydroaustin, forming precalidodehydroaustin. Finally, the iron/alpha-ketoglutarate-dependent dioxygenase converts precalidodehydroaustin into calidodehydroaustin. This chain is Short chain dehydrogenase ausT, found in Aspergillus calidoustus.